Consider the following 483-residue polypeptide: Zinc metalloproteinase/disintegrin VMP-II (483 aa).

The signal sequence occupies residues 1 to 20; sequence MIQVLLVTLCLAAFPYQGNS. The propeptide occupies 21–191; sequence IILESGNVND…KASQLNLTPE (171 aa). The Peptidase M12B domain occupies 198-394; the sequence is RYIELVVVAD…HNPQCMLNEP (197 aa). The Ca(2+) site is built by Glu201 and Asp285. 3 disulfide bridges follow: Cys309–Cys389, Cys349–Cys373, and Cys351–Cys356. His334 lines the Zn(2+) pocket. Residue Glu335 is part of the active site. Zn(2+) is bound by residues His338 and His344. Positions 389 and 392 each coordinate Ca(2+). Residues 395–414 constitute a propeptide that is removed on maturation; that stretch reads LRTDIVSTPVSGNELWETGE. The Disintegrin domain occupies 402-483; the sequence is TPVSGNELWE…AGCPRNPFHA (82 aa). Disulfide bonds link Cys425–Cys448, Cys439–Cys445, Cys444–Cys469, and Cys457–Cys476. Positions 461–463 match the Cell attachment site; atypical (KGD) motif; that stretch reads KGD.

It belongs to the venom metalloproteinase (M12B) family. P-II subfamily. P-IIe sub-subfamily. In terms of assembly, heterodimer; disulfide-linked (disintegrin). It depends on Zn(2+) as a cofactor. Expressed by the venom gland.

It localises to the secreted. Inhibited by EDTA and 1,10-phenanthroline, but not by PMSF. In terms of biological role, has fibrinolytic activity. The recombinant enzyme cleaves both alpha- (FGA) and beta-chains (FGB) of fibrinogen, but not the gamma-chain. The recombinant protein does not produce hemorrhage in mice and does not have effect on ADP- or collagen-stimulated platelet aggregation. Its function is as follows. Inhibits platelet aggregation induced by ADP, thrombin, platelet-activating factor and collagen. Acts by inhibiting fibrinogen interaction with platelet receptors GPIIb/GPIIIa (ITGA2B/ITGB3). The protein is Zinc metalloproteinase/disintegrin VMP-II of Agkistrodon piscivorus leucostoma (Western cottonmouth).